We begin with the raw amino-acid sequence, 324 residues long: N-acetyl-gamma-glutamyl-phosphate reductase (324 aa).

Cysteine 131 is a catalytic residue.

This sequence belongs to the NAGSA dehydrogenase family. Type 1 subfamily.

The protein localises to the cytoplasm. It catalyses the reaction N-acetyl-L-glutamate 5-semialdehyde + phosphate + NADP(+) = N-acetyl-L-glutamyl 5-phosphate + NADPH + H(+). It participates in amino-acid biosynthesis; L-arginine biosynthesis; N(2)-acetyl-L-ornithine from L-glutamate: step 3/4. In terms of biological role, catalyzes the NADPH-dependent reduction of N-acetyl-5-glutamyl phosphate to yield N-acetyl-L-glutamate 5-semialdehyde. The polypeptide is N-acetyl-gamma-glutamyl-phosphate reductase (Bradyrhizobium sp. (strain ORS 278)).